Here is a 393-residue protein sequence, read N- to C-terminus: Putative acid--amine ligase HI_0929 (393 aa).

ATP is bound at residue 103–105 (RFD). Residues Asp105, Glu117, and Asn119 each contribute to the Mg(2+) site. ATP contacts are provided by residues Lys267, Lys303, Gly310, Gln343, and 378-380 (AVT).

This sequence belongs to the glutathionylspermidine synthase preATP-grasp family.

In terms of biological role, may be a ligase forming an amide bond. Shows ATPase activity. The chain is Putative acid--amine ligase HI_0929 from Haemophilus influenzae (strain ATCC 51907 / DSM 11121 / KW20 / Rd).